The chain runs to 222 residues: DnaJ homolog subfamily B member 9 (222 aa).

A signal peptide spans 1–23 (MATPQSVFVFAICILMITELILA). Residues 26–90 (NYYDILGVPK…NRRKEYDIIG (65 aa)) enclose the J domain. The interval 91-222 (HSAFTNGKGQ…VTTYTDCSGQ (132 aa)) is divergent targeting domain. The residue at position 133 (serine 133) is a Phosphoserine.

In terms of assembly, interacts with HSPA5/BiP; interaction is direct. Interacts with ERN1/IRE1 (via the luminal region). Interacts with DERL1.

It localises to the endoplasmic reticulum lumen. Functionally, co-chaperone for Hsp70 protein HSPA5/BiP that acts as a key repressor of the ERN1/IRE1-mediated unfolded protein response (UPR). J domain-containing co-chaperones stimulate the ATPase activity of Hsp70 proteins and are required for efficient substrate recognition by Hsp70 proteins. In the unstressed endoplasmic reticulum, interacts with the luminal region of ERN1/IRE1 and selectively recruits HSPA5/BiP: HSPA5/BiP disrupts the dimerization of the active ERN1/IRE1 luminal region, thereby inactivating ERN1/IRE1. Also involved in endoplasmic reticulum-associated degradation (ERAD) of misfolded proteins. Required for survival of B-cell progenitors and normal antibody production. In Rattus norvegicus (Rat), this protein is DnaJ homolog subfamily B member 9.